The primary structure comprises 572 residues: uncharacterized protein (572 aa).

Residues 543-572 (AYKKSSNTNSTTNSMNPRRSTVSSEDWVLN) form a disordered region. The span at 547-563 (SSNTNSTTNSMNPRRST) shows a compositional bias: low complexity.

This is an uncharacterized protein from Acanthamoeba polyphaga (Amoeba).